The primary structure comprises 331 residues: Glycerol-3-phosphate dehydrogenase [NAD(P)+] (331 aa).

Trp-13, Arg-33, and Lys-103 together coordinate NADPH. Residues Lys-103, Gly-131, and Thr-133 each contribute to the sn-glycerol 3-phosphate site. NADPH is bound at residue Ala-135. The sn-glycerol 3-phosphate site is built by Lys-187, Asp-240, Ser-250, Arg-251, and Asn-252. Lys-187 serves as the catalytic Proton acceptor. Residue Arg-251 participates in NADPH binding. NADPH contacts are provided by Val-275 and Glu-277.

This sequence belongs to the NAD-dependent glycerol-3-phosphate dehydrogenase family.

Its subcellular location is the cytoplasm. The catalysed reaction is sn-glycerol 3-phosphate + NAD(+) = dihydroxyacetone phosphate + NADH + H(+). It carries out the reaction sn-glycerol 3-phosphate + NADP(+) = dihydroxyacetone phosphate + NADPH + H(+). Its pathway is membrane lipid metabolism; glycerophospholipid metabolism. Its function is as follows. Catalyzes the reduction of the glycolytic intermediate dihydroxyacetone phosphate (DHAP) to sn-glycerol 3-phosphate (G3P), the key precursor for phospholipid synthesis. The protein is Glycerol-3-phosphate dehydrogenase [NAD(P)+] of Novosphingobium aromaticivorans (strain ATCC 700278 / DSM 12444 / CCUG 56034 / CIP 105152 / NBRC 16084 / F199).